The chain runs to 406 residues: Tyrosine--tRNA ligase (406 aa).

Position 35 (Tyr35) interacts with L-tyrosine. Residues 40–49 (ATSASLHIGH) carry the 'HIGH' region motif. 2 residues coordinate L-tyrosine: Tyr167 and Gln171. The short motif at 227–231 (KMGKS) is the 'KMSKS' region element. Lys230 contributes to the ATP binding site. The region spanning 341–405 (ILLVDLMVLA…IGKKKILRIV (65 aa)) is the S4 RNA-binding domain.

Belongs to the class-I aminoacyl-tRNA synthetase family. TyrS type 1 subfamily. As to quaternary structure, homodimer.

It localises to the cytoplasm. It catalyses the reaction tRNA(Tyr) + L-tyrosine + ATP = L-tyrosyl-tRNA(Tyr) + AMP + diphosphate + H(+). Functionally, catalyzes the attachment of tyrosine to tRNA(Tyr) in a two-step reaction: tyrosine is first activated by ATP to form Tyr-AMP and then transferred to the acceptor end of tRNA(Tyr). This is Tyrosine--tRNA ligase from Borrelia recurrentis (strain A1).